The sequence spans 1582 residues: Dynein axonemal assembly factor 1 homolog (1582 aa).

LRR repeat units follow at residues 38 to 60 (RLND…DEYT), 61 to 82 (ELKS…TKLT), 83 to 104 (KLKC…EFNR), 105 to 126 (ELDT…GTDI), 129 to 150 (VLNT…AALV), and 154 to 175 (TLSV…KIFE). The 39-residue stretch at 189–227 (PVVSRLPQYRKTLILACKELTYLDSRPVFPRDRACAEAW) folds into the LRRCT domain. Disordered regions lie at residues 245-420 (AERR…SEMD), 560-587 (SSDV…VKSQ), 859-878 (FSKD…EDRR), 913-942 (DTGE…DDDA), 1073-1092 (SSNE…LVER), 1101-1137 (MQRM…MGEG), 1150-1218 (TEII…QAEG), 1305-1345 (KDNE…TAKD), 1358-1438 (LDPE…PYQT), 1484-1517 (EDSK…NPKN), and 1529-1548 (PSES…STEQ). Residues 313–327 (ESQASEHSTTSSTSA) are compositionally biased toward low complexity. Over residues 339-392 (HIAERISNRRVKPLEGRPKVLYDEAASGDEKAVTTTDSKKDSNAEDLPELKDIT) the composition is skewed to basic and acidic residues. A compositionally biased stretch (polar residues) spans 409–420 (TLLQSDSGSEMD). Positions 572–582 (ESDEEPTEEEM) are enriched in acidic residues. Residues 928–942 (SDSESEKEVEEDDDA) are compositionally biased toward acidic residues. Composition is skewed to basic and acidic residues over residues 1078–1092 (LEAK…LVER) and 1103–1125 (RMKE…KEEE). The span at 1166–1178 (EGGAQQEEGGAQS) shows a compositional bias: low complexity. Basic and acidic residues-rich tracts occupy residues 1321 to 1335 (PKEE…ETET), 1398 to 1427 (SALK…KDTE), and 1484 to 1514 (EDSK…RPEN). Positions 1529–1540 (PSESLEDTEATE) are enriched in acidic residues.

Belongs to the DNAAF1 family.

It is found in the cell projection. The protein localises to the cilium. Cilium-specific protein required for cilia structures. This chain is Dynein axonemal assembly factor 1 homolog (dtr), found in Drosophila pseudoobscura pseudoobscura (Fruit fly).